Reading from the N-terminus, the 1370-residue chain is DNA-directed RNA polymerase subunit beta (1370 aa).

It belongs to the RNA polymerase beta chain family. As to quaternary structure, the RNAP catalytic core consists of 2 alpha, 1 beta, 1 beta' and 1 omega subunit. When a sigma factor is associated with the core the holoenzyme is formed, which can initiate transcription.

It catalyses the reaction RNA(n) + a ribonucleoside 5'-triphosphate = RNA(n+1) + diphosphate. DNA-dependent RNA polymerase catalyzes the transcription of DNA into RNA using the four ribonucleoside triphosphates as substrates. This is DNA-directed RNA polymerase subunit beta from Albidiferax ferrireducens (strain ATCC BAA-621 / DSM 15236 / T118) (Rhodoferax ferrireducens).